A 421-amino-acid polypeptide reads, in one-letter code: Probable G-protein coupled receptor 151 (421 aa).

Residues 1-44 (MGKATLAVFADSDSSNMNESFAHLHFAGGYLPSDSKGWRTIIPS) are Extracellular-facing. N-linked (GlcNAc...) asparagine glycosylation occurs at N18. A helical transmembrane segment spans residues 45–65 (LLAAVCLVGFVGNLCVIGLLL). The Cytoplasmic portion of the chain corresponds to 66–74 (HGVWKRKPS). The helical transmembrane segment at 75 to 95 (MIHSLILNLSLADISLLLFSA) threads the bilayer. Topologically, residues 96–122 (PVRATAYVKGVWDLGWFVCKSSDWFTH) are extracellular. Residues C114 and C190 are joined by a disulfide bond. Residues 123–143 (MCMAAKSLTFVVVAKVCFMYA) form a helical membrane-spanning segment. At 144-156 (SDPAKPVGTHNCT) the chain is on the cytoplasmic side. The helical transmembrane segment at 157-177 (IWSLLGAIWVVASLLPLPEWF) threads the bilayer. Topologically, residues 178–204 (FSTTRHHAGVEMCLVDVPAVAAEFMSL) are extracellular. Residues 205–225 (FGKLYPLLVFCLPLLLAGFYF) traverse the membrane as a helical segment. Residues 226 to 258 (WRAYNQCKIRCAKTQNLRNQMRSKQLTVMLLST) are Cytoplasmic-facing. The helical transmembrane segment at 259–279 (AVTSALLWLPEWIAWLWVWHL) threads the bilayer. Residues 280 to 289 (KAGGPMPPQG) are Extracellular-facing. Residues 290–310 (FIALSQVLMFSISTVNPLIFL) traverse the membrane as a helical segment. The Cytoplasmic portion of the chain corresponds to 311–421 (MMSEEFKAGL…HEGQETKGCN (111 aa)). Disordered regions lie at residues 346–381 (IETL…TDKV) and 394–421 (HERD…KGCN). Basic and acidic residues-rich tracts occupy residues 364-379 (DTDR…ETTD) and 409-421 (PWEH…KGCN).

Belongs to the G-protein coupled receptor 1 family. As to expression, exclusively expressed in neurons of the habenular complex. The expression is particularly prominent in the medial habenular nucleus, whereas the lateral habenular nucleus exhibited a lower level of expression.

Its subcellular location is the cell membrane. Orphan receptor. In Rattus norvegicus (Rat), this protein is Probable G-protein coupled receptor 151 (Gpr151).